Here is a 409-residue protein sequence, read N- to C-terminus: uncharacterized protein (409 aa).

Helical transmembrane passes span 62–82, 100–120, 123–143, 152–172, 183–203, 252–272, 293–313, 328–348, 355–375, and 376–396; these read FSLG…WVWI, LLLF…PEAF, MGLL…LFAL, ASFM…TFWI, VVLW…RYWV, GTPW…WIYF, AQYL…FTAV, YNFA…TMWM, VLPY…TLVP, and FVAN…VAVW.

Its subcellular location is the cell membrane. This is an uncharacterized protein from Rhizobium meliloti (strain 1021) (Ensifer meliloti).